The following is a 571-amino-acid chain: Apolipoprotein N-acyltransferase (571 aa).

6 helical membrane-spanning segments follow: residues 13-33 (VVLWLSGPPFAIGPLVFIALV), 51-68 (LYAASLAYWLLSLQGLRY), 72-92 (LMFLPWIALSGYLAIYPVLFI), 118-138 (LVAAVVWVGLEWIRNYFFTGI), 152-172 (MLIQIADLGGTYAVSFVIVCV), and 199-219 (LVTAGGLLIATMVYGAMSMNA). The 294-residue stretch at 234 to 527 (NELTVYEQDI…SDVIYAQPRR (294 aa)) folds into the CN hydrolase domain. E275 (proton acceptor) is an active-site residue. Residue K380 is part of the active site. Catalysis depends on C430, which acts as the Nucleophile. The helical transmembrane segment at 542–562 (AGLMGAATLCGLAWMTFEWLM) threads the bilayer.

Belongs to the CN hydrolase family. Apolipoprotein N-acyltransferase subfamily.

Its subcellular location is the cell inner membrane. It catalyses the reaction N-terminal S-1,2-diacyl-sn-glyceryl-L-cysteinyl-[lipoprotein] + a glycerophospholipid = N-acyl-S-1,2-diacyl-sn-glyceryl-L-cysteinyl-[lipoprotein] + a 2-acyl-sn-glycero-3-phospholipid + H(+). It participates in protein modification; lipoprotein biosynthesis (N-acyl transfer). Catalyzes the phospholipid dependent N-acylation of the N-terminal cysteine of apolipoprotein, the last step in lipoprotein maturation. The chain is Apolipoprotein N-acyltransferase from Rhodopirellula baltica (strain DSM 10527 / NCIMB 13988 / SH1).